Here is a 356-residue protein sequence, read N- to C-terminus: Phosphate acyltransferase (356 aa).

The protein belongs to the PlsX family. In terms of assembly, homodimer. Probably interacts with PlsY.

The protein localises to the cytoplasm. It carries out the reaction a fatty acyl-[ACP] + phosphate = an acyl phosphate + holo-[ACP]. It functions in the pathway lipid metabolism; phospholipid metabolism. In terms of biological role, catalyzes the reversible formation of acyl-phosphate (acyl-PO(4)) from acyl-[acyl-carrier-protein] (acyl-ACP). This enzyme utilizes acyl-ACP as fatty acyl donor, but not acyl-CoA. This Stutzerimonas stutzeri (strain A1501) (Pseudomonas stutzeri) protein is Phosphate acyltransferase.